A 343-amino-acid polypeptide reads, in one-letter code: Fc receptor-like protein 1 (343 aa).

An N-terminal signal peptide occupies residues 1–16 (MLPWLLLLICALPCEP). 2 consecutive Ig-like C2-type domains span residues 17–109 (AGIS…VSIH) and 117–200 (PVLT…EVVA). Topologically, residues 17 to 219 (AGISDVSLKT…PTENGISHLS (203 aa)) are extracellular. Asparagine 51 is a glycosylation site (N-linked (GlcNAc...) asparagine). Cysteine 138 and cysteine 185 are joined by a disulfide. N-linked (GlcNAc...) asparagine glycosylation occurs at asparagine 202. A helical transmembrane segment spans residues 220-240 (LGLTGWLLGCLSPITMALIFC). Over 241–343 (YWLKRKIGRQ…IAHMDYEDAM (103 aa)) the chain is Cytoplasmic. The tract at residues 251-278 (SEDPVRSPPQTVLQGSTYPKSPDSRQPE) is disordered. The segment covering 258-269 (PPQTVLQGSTYP) has biased composition (polar residues). 3 short sequence motifs (ITIM motif) span residues 266–271 (STYPKS), 279–284 (PLYENV), and 291–296 (EVYSLV). Tyrosine 281 is modified (phosphotyrosine). Position 297 is a phosphotyrosine (tyrosine 297). Short sequence motifs (ITIM motif) lie at residues 325–330 (GLYSKP) and 337–342 (MDYEDA).

Interacts with ABL1. Interacts with GRB2 and SOS1. Interacts with SHIP-1/INPP5D. In terms of processing, phosphorylated on C-terminal region upon BCR ligation leading to recruitment of ABL1. Widely expressed. Expressed in B-cells at the various stages of differentiation.

It is found in the cell membrane. In terms of biological role, may function as an activating coreceptor in B-cells. May function in B-cells activation and differentiation. This chain is Fc receptor-like protein 1 (Fcrl1), found in Mus musculus (Mouse).